The following is a 206-amino-acid chain: Large ribosomal subunit protein eL13 (206 aa).

Over residues glutamate 184 to lysine 193 the composition is skewed to basic and acidic residues. Positions glutamate 184–alanine 206 are disordered.

This sequence belongs to the eukaryotic ribosomal protein eL13 family.

The sequence is that of Large ribosomal subunit protein eL13 (RPL13) from Tetrahymena thermophila (strain SB210).